Here is a 599-residue protein sequence, read N- to C-terminus: Mediator of RNA polymerase II transcription subunit 26 (599 aa).

Positions 10 to 87 (QIRDRLLQAI…RSWQKLIEPV (78 aa)) constitute a TFIIS N-terminal domain. Disordered regions lie at residues 98 to 331 (AGAP…RLEL), 352 to 403 (AGLG…RDYT), and 427 to 470 (FDPM…LQSP). Residues 123–133 (SVHDLKYRNDM) show a composition bias toward basic and acidic residues. Positions 174 to 191 (VPNSSPLPTNGISGSPES) are enriched in polar residues. Residues 207–218 (NRLEHGENDKHS) are compositionally biased toward basic and acidic residues. The segment covering 314-324 (SPLPLAQPSTP) has biased composition (pro residues). Residues 441 to 463 (EPVRADSPVHTEQPRTELDKPEA) show a composition bias toward basic and acidic residues. Phosphoserine is present on residues Ser-447 and Ser-469.

Belongs to the Mediator complex subunit 26 family. Component of the Mediator complex, which is composed of MED1, MED4, MED6, MED7, MED8, MED9, MED10, MED11, MED12, MED13, MED13L, MED14, MED15, MED16, MED17, MED18, MED19, MED20, MED21, MED22, MED23, MED24, MED25, MED26, MED27, MED29, MED30, MED31, CCNC, CDK8 and CDC2L6/CDK11. The MED12, MED13, CCNC and CDK8 subunits form a distinct module termed the CDK8 module. Mediator containing the CDK8 module is less active than Mediator lacking this module in supporting transcriptional activation. Individual preparations of the Mediator complex lacking one or more distinct subunits have been variously termed ARC, CRSP, DRIP, PC2, SMCC and TRAP. Interacts with CEBPB (when not methylated).

It is found in the nucleus. Its function is as follows. Component of the Mediator complex, a coactivator involved in the regulated transcription of nearly all RNA polymerase II-dependent genes. Mediator functions as a bridge to convey information from gene-specific regulatory proteins to the basal RNA polymerase II transcription machinery. Mediator is recruited to promoters by direct interactions with regulatory proteins and serves as a scaffold for the assembly of a functional pre-initiation complex with RNA polymerase II and the general transcription factors. The protein is Mediator of RNA polymerase II transcription subunit 26 (MED26) of Bos taurus (Bovine).